We begin with the raw amino-acid sequence, 562 residues long: NAD-dependent malic enzyme (562 aa).

Y101 serves as the catalytic Proton donor. R154 contributes to the NAD(+) binding site. K172 serves as the catalytic Proton acceptor. Residues E243, D244, and D267 each contribute to the a divalent metal cation site. NAD(+)-binding residues include D267 and N415.

It belongs to the malic enzymes family. Homotetramer. The cofactor is Mg(2+). Requires Mn(2+) as cofactor.

The catalysed reaction is (S)-malate + NAD(+) = pyruvate + CO2 + NADH. It carries out the reaction oxaloacetate + H(+) = pyruvate + CO2. The chain is NAD-dependent malic enzyme from Shewanella piezotolerans (strain WP3 / JCM 13877).